A 553-amino-acid polypeptide reads, in one-letter code: CTP synthase (553 aa).

The segment at 1–278 (MVRRTHGNSQ…DAYVVRELGL (278 aa)) is amidoligase domain. A CTP-binding site is contributed by S25. S25 serves as a coordination point for UTP. Residues 26–31 (SLGKGL) and D83 contribute to the ATP site. Residues D83 and E152 each coordinate Mg(2+). Residues 159–161 (DIE), 199–204 (KTKPTQ), and K235 each bind CTP. Residues 199–204 (KTKPTQ) and K235 each bind UTP. The Glutamine amidotransferase type-1 domain occupies 303 to 552 (NIAIVGKYID…VKAALDHQAA (250 aa)). Residue G366 participates in L-glutamine binding. C393 (nucleophile; for glutamine hydrolysis) is an active-site residue. L-glutamine contacts are provided by residues 394–397 (LGLQ), E417, and R478. Catalysis depends on residues H525 and E527.

It belongs to the CTP synthase family. Homotetramer.

The enzyme catalyses UTP + L-glutamine + ATP + H2O = CTP + L-glutamate + ADP + phosphate + 2 H(+). The catalysed reaction is L-glutamine + H2O = L-glutamate + NH4(+). It carries out the reaction UTP + NH4(+) + ATP = CTP + ADP + phosphate + 2 H(+). It functions in the pathway pyrimidine metabolism; CTP biosynthesis via de novo pathway; CTP from UDP: step 2/2. With respect to regulation, allosterically activated by GTP, when glutamine is the substrate; GTP has no effect on the reaction when ammonia is the substrate. The allosteric effector GTP functions by stabilizing the protein conformation that binds the tetrahedral intermediate(s) formed during glutamine hydrolysis. Inhibited by the product CTP, via allosteric rather than competitive inhibition. Functionally, catalyzes the ATP-dependent amination of UTP to CTP with either L-glutamine or ammonia as the source of nitrogen. Regulates intracellular CTP levels through interactions with the four ribonucleotide triphosphates. In Bifidobacterium longum (strain NCC 2705), this protein is CTP synthase.